The following is a 357-amino-acid chain: Probable cinnamyl alcohol dehydrogenase 2 (357 aa).

Zn(2+) is bound at residue Cys47. Ser49 contributes to the NADP(+) binding site. Zn(2+) contacts are provided by His69, Glu70, Cys100, Cys103, Cys106, Cys114, and Cys163. Residues Thr167, 188–193, 211–216, Thr251, Gly275, and 298–300 each bind NADP(+); these read GLGGVG, SSSDKK, and SFI.

It belongs to the zinc-containing alcohol dehydrogenase family. As to quaternary structure, homodimer. The cofactor is Zn(2+).

The enzyme catalyses (E)-cinnamyl alcohol + NADP(+) = (E)-cinnamaldehyde + NADPH + H(+). It catalyses the reaction (E)-coniferol + NADP(+) = (E)-coniferaldehyde + NADPH + H(+). The catalysed reaction is (E)-sinapyl alcohol + NADP(+) = (E)-sinapaldehyde + NADPH + H(+). It carries out the reaction (E)-4-coumaroyl alcohol + NADP(+) = (E)-4-coumaraldehyde + NADPH + H(+). The enzyme catalyses (E)-caffeyl alcohol + NADP(+) = (E)-caffeyl aldehyde + NADPH + H(+). Its pathway is aromatic compound metabolism; phenylpropanoid biosynthesis. Its function is as follows. Involved in lignin biosynthesis. Catalyzes the final step specific for the production of lignin monomers. Catalyzes the NADPH-dependent reduction of coniferaldehyde, 5-hydroxyconiferaldehyde, sinapaldehyde, 4-coumaraldehyde and caffeyl aldehyde to their respective alcohols. In Picea abies (Norway spruce), this protein is Probable cinnamyl alcohol dehydrogenase 2 (CAD2).